An 808-amino-acid chain; its full sequence is Digalactosyldiacylglycerol synthase 1, chloroplastic (808 aa).

The disordered stretch occupies residues 1 to 23 (MVKETLIPPSSTSMTTGTSSSSS). The N-terminal 58 residues, 1 to 58 (MVKETLIPPSSTSMTTGTSSSSSLSMTLSSTNALSFLSKGWREVWDSADADLQLMRDR), are a transit peptide targeting the chloroplast. Positions 10–23 (SSTSMTTGTSSSSS) are enriched in low complexity.

Belongs to the glycosyltransferase group 1 family. Glycosyltransferase 4 subfamily.

The protein localises to the plastid. Its subcellular location is the chloroplast outer membrane. It carries out the reaction a 1,2-diacyl-3-O-(beta-D-galactosyl)-sn-glycerol + UDP-alpha-D-galactose = a 1,2-diacyl-3-O-[alpha-D-galactosyl-(1-&gt;6)-beta-D-galactosyl]-sn-glycerol + UDP + H(+). Functionally, involved in the synthesis of diacylglycerol galactolipids that are specifically found in thylakoid membranes. Specific for alpha-glycosidic linkages. Responsible for the final assembly of galactolipids in photosynthetic membranes. Digalactosyldiacylglycerol (DGDG) provides stability to the photosystem I (PSI) complex, especially to the PsaA, PsaB, PsaC, PsaL and PsaH subunits. This chain is Digalactosyldiacylglycerol synthase 1, chloroplastic, found in Arabidopsis thaliana (Mouse-ear cress).